Consider the following 1211-residue polypeptide: Diacylglycerol kinase 1 (1211 aa).

Residues 174–244 (HHSLGGHLSH…RNSSKKSSNS (71 aa)) are disordered. Residues 197-230 (VTPSPLASGPSMFQASNPARRSVDSSPSHSATNH) are compositionally biased toward polar residues. The segment covering 231–244 (SQMSRNSSKKSSNS) has biased composition (low complexity). 2 EF-hand domains span residues 286–321 (RPEDKLEFMFRLYDTDSNGVLDTAEMDAIVNQMMAV) and 331–366 (ELRPILQEMMVEIDYDADGTVSLDEWQRGGMTTIPL). Residues Asp-299, Asp-301, Asn-303, Glu-310, Asp-344, Asp-346, Asp-348, Thr-350, and Glu-355 each coordinate Ca(2+). Phorbol-ester/DAG-type zinc fingers lie at residues 382–432 (IHVW…PASC) and 449–498 (LHHW…KKEC). The DAGKc domain maps to 548-682 (ELSCPLLVFV…LDRWSIEVTN (135 aa)). 3 disordered regions span residues 789–841 (TLRT…ETEK), 874–893 (AATATPVGSNQSDNSSQRNK), and 910–958 (DHED…QQQQ). The segment covering 795–805 (SSSSSNTSSGS) has biased composition (low complexity). Basic and acidic residues predominate over residues 826–841 (DVREKSVPRRSGETEK). Positions 879 to 893 (PVGSNQSDNSSQRNK) are enriched in polar residues. A compositionally biased stretch (low complexity) spans 931 to 958 (NSIPATPATPITPTTPNAASSVLQQQQQ).

The protein belongs to the eukaryotic diacylglycerol kinase family. In 10-11 hours embryos, expression is abundant in a limited number of cells in the procephalic region and in the ventral nerve cord. Predominantly expressed in the adult nervous system and muscle: including compound eyes, brain cortex, fibrillar muscle, and tubular muscle.

It catalyses the reaction a 1,2-diacyl-sn-glycerol + ATP = a 1,2-diacyl-sn-glycero-3-phosphate + ADP + H(+). Upon cell stimulation converts the second messenger diacylglycerol into phosphatidate, initiating the resynthesis of phosphatidylinositols and attenuating protein kinase C activity. May have a role in the development of the embryonic nervous system and the function of the adult nervous system and muscle; regulating signal transduction in neurons. The chain is Diacylglycerol kinase 1 (Dgk) from Drosophila melanogaster (Fruit fly).